The sequence spans 339 residues: Nicotinate-nucleotide--dimethylbenzimidazole phosphoribosyltransferase (339 aa).

The active-site Proton acceptor is the Glu-306.

The protein belongs to the CobT family.

The catalysed reaction is 5,6-dimethylbenzimidazole + nicotinate beta-D-ribonucleotide = alpha-ribazole 5'-phosphate + nicotinate + H(+). It participates in nucleoside biosynthesis; alpha-ribazole biosynthesis; alpha-ribazole from 5,6-dimethylbenzimidazole: step 1/2. In terms of biological role, catalyzes the synthesis of alpha-ribazole-5'-phosphate from nicotinate mononucleotide (NAMN) and 5,6-dimethylbenzimidazole (DMB). The chain is Nicotinate-nucleotide--dimethylbenzimidazole phosphoribosyltransferase from Brucella abortus (strain S19).